Consider the following 262-residue polypeptide: Type III pantothenate kinase (262 aa).

An ATP-binding site is contributed by 6–13 (DVGNTNAV). Substrate is bound by residues Tyr-100 and 107–110 (GADR). Asp-109 (proton acceptor) is an active-site residue. K(+) is bound at residue Asp-129. Thr-132 lines the ATP pocket. A substrate-binding site is contributed by Thr-184.

Belongs to the type III pantothenate kinase family. As to quaternary structure, homodimer. NH4(+) serves as cofactor. The cofactor is K(+).

Its subcellular location is the cytoplasm. It catalyses the reaction (R)-pantothenate + ATP = (R)-4'-phosphopantothenate + ADP + H(+). It functions in the pathway cofactor biosynthesis; coenzyme A biosynthesis; CoA from (R)-pantothenate: step 1/5. Its function is as follows. Catalyzes the phosphorylation of pantothenate (Pan), the first step in CoA biosynthesis. The protein is Type III pantothenate kinase of Bacillus anthracis (strain A0248).